A 419-amino-acid polypeptide reads, in one-letter code: Pyrrolysine--tRNA ligase (419 aa).

A disordered region spans residues 100 to 157 (APKVKKAMPKSVSRAPKPLENSVSAKASTNTSRSVPSPAKSTPNSSVPASAPAPSLTR). Residues 120 to 141 (NSVSAKASTNTSRSVPSPAKST) show a composition bias toward polar residues. Positions 142–154 (PNSSVPASAPAPS) are enriched in low complexity.

It belongs to the class-II aminoacyl-tRNA synthetase family.

It localises to the cytoplasm. It carries out the reaction tRNA(Pyl) + L-pyrrolysine + ATP = L-pyrrolysyl-tRNA(Pyl) + AMP + diphosphate. Its function is as follows. Catalyzes the attachment of pyrrolysine to tRNA(Pyl). Pyrrolysine is a lysine derivative encoded by the termination codon UAG. The chain is Pyrrolysine--tRNA ligase (pylS) from Methanosarcina barkeri.